Here is a 166-residue protein sequence, read N- to C-terminus: T-cell surface glycoprotein CD3 zeta chain (166 aa).

Residues 1-21 (MKWTALVIVAVLQTQFPVTAA) form the signal peptide. Topologically, residues 22–30 (QSFGLLDPK) are extracellular. A helical transmembrane segment spans residues 31 to 51 (LCYLLDGILFIYGVIVTALFL). The Cytoplasmic segment spans residues 52–166 (RAKFSRSADA…ALHMQALPPR (115 aa)). Residue serine 58 is modified to Phosphoserine. ITAM domains lie at 61–89 (APAY…LDRR), 100–128 (PQRK…EIGM), and 133–161 (QRRR…LHMQ). Residues tyrosine 64, tyrosine 72, tyrosine 83, tyrosine 111, tyrosine 123, tyrosine 144, and tyrosine 155 each carry the phosphotyrosine modification. Positions 126–156 (IGMKSDNQRRRGKGHDGVYQGLSTATKDTYD) are disordered.

This sequence belongs to the CD3Z/FCER1G family. As to quaternary structure, the TCR-CD3 complex is composed of a CD3D/CD3E and a CD3G/CD3E heterodimers that preferentially associate with TCRalpha and TCRbeta, respectively, to form TCRalpha/CD3E/CD3G and TCRbeta/CD3G/CD3E trimers. In turn, the hexamer interacts with CD3Z homodimer to form the TCR-CD3 complex. Alternatively, TCRalpha and TCRbeta can be replaced by TCRgamma and TCRdelta. Interacts with SLA. Interacts with TRAT1. Interacts with DOCK2. Interacts with SLA2. Interacts with SHB. Interacts with ZAP70. Interacts (tyrosine phosphorylated) with SHC1 (via SH2 domain). Interacts with PTPRC. Interacts with CRK; this interaction regulates CD3Z phosphorylation. Interacts (on T cell side) with CD81, ICAM1 and CD9 at immunological synapses between antigen-presenting cells and T cells. Interacts with CD160. Interacts with LY6E. Interacts with LY6E. The signaling subunit of immunoglobulin gamma (IgG) Fc receptor complex. As a homodimer or a heterodimer with FCER1G, associates with the ligand binding subunit FCGR3A (via transmembrane domain); this interaction is a prerequisite for Fc receptor complex expression on the cell surface. Interacts with CD5. In terms of processing, phosphorylated on Tyr residues after T-cell receptor triggering by LCK in association with CD4/CD8.

It localises to the cell membrane. Functionally, part of the TCR-CD3 complex present on T-lymphocyte cell surface that plays an essential role in adaptive immune response. When antigen presenting cells (APCs) activate T-cell receptor (TCR), TCR-mediated signals are transmitted across the cell membrane by the CD3 chains CD3D, CD3E, CD3G and CD3Z. All CD3 chains contain immunoreceptor tyrosine-based activation motifs (ITAMs) in their cytoplasmic domain. Upon TCR engagement, these motifs become phosphorylated by Src family protein tyrosine kinases LCK and FYN, resulting in the activation of downstream signaling pathways. CD3Z ITAMs phosphorylation creates multiple docking sites for the protein kinase ZAP70 leading to ZAP70 phosphorylation and its conversion into a catalytically active enzyme. Plays an important role in intrathymic T-cell differentiation. Additionally, participates in the activity-dependent synapse formation of retinal ganglion cells (RGCs) in both the retina and dorsal lateral geniculate nucleus (dLGN). This chain is T-cell surface glycoprotein CD3 zeta chain (CD247), found in Ovis aries (Sheep).